Reading from the N-terminus, the 597-residue chain is FERM domain-containing protein 3 (597 aa).

Positions 32–312 constitute an FERM domain; the sequence is MRCTIRLLDD…ENQAFYKYAK (281 aa). The tract at residues 409 to 435 is disordered; the sequence is SAPLISSSPVKAAQEYEDPPSEEEDKI. Positions 423–432 are enriched in acidic residues; it reads EYEDPPSEEE. A helical transmembrane segment spans residues 531 to 551; it reads LLVVGLGLLLFVFPLLLLLLE.

It localises to the membrane. Its function is as follows. Putative tumor suppressor gene that may be implicated in the origin and progression of lung cancer. In Pongo abelii (Sumatran orangutan), this protein is FERM domain-containing protein 3 (FRMD3).